Here is a 275-residue protein sequence, read N- to C-terminus: uncharacterized protein (275 aa).

This sequence belongs to the SMP-30/CGR1 family.

This is an uncharacterized protein from Sulfolobus acidocaldarius (strain ATCC 33909 / DSM 639 / JCM 8929 / NBRC 15157 / NCIMB 11770).